Here is a 571-residue protein sequence, read N- to C-terminus: Ferroportin (571 aa).

The Cytoplasmic portion of the chain corresponds to 1-23; that stretch reads MTRAGDHNRQRGCCGSLADYLTS. A helical transmembrane segment spans residues 24 to 53; sequence AKFLLYLGHSLSTWGDRMWHFAVSVFLVEL. Residues Asp39 and His43 each coordinate Fe cation. Residues 54 to 57 lie on the Extracellular side of the membrane; the sequence is YGNS. Residues 58 to 84 form a helical membrane-spanning segment; sequence LLLTAVYGLVVAGSVLVLGAIIGDWVD. At 85–87 the chain is on the cytoplasmic side; sequence KNA. Residues 88–118 traverse the membrane as a helical segment; that stretch reads RLKVAQTSLVVQNVSVILCGIILMMVFLHKH. Residues 119–126 lie on the Extracellular side of the membrane; sequence ELLTMYHG. The chain crosses the membrane as a helical span at residues 127 to 162; it reads WVLTSCYILIITIANIANLASTATAITIQRDWIVVV. Residues 163–164 are Cytoplasmic-facing; sequence AG. Residues 165–195 traverse the membrane as a helical segment; it reads EDRSKLANMNATIRRIDQLTNILAPMAVGQI. Over 196–202 the chain is Extracellular; the sequence is MTFGSPV. Residues 203-229 form a helical membrane-spanning segment; it reads IGCGFISGWNLVSMCVEYVLLWKVYQK. Residues 230-306 are Cytoplasmic-facing; sequence TPALAVKAGL…DGWVSYYNQP (77 aa). A helical transmembrane segment spans residues 307 to 333; it reads VFLAGMGLAFLYMTVLGFDCITTGYAY. Cys326 is a Fe cation binding site. Topologically, residues 334–338 are extracellular; it reads TQGLS. A helical membrane pass occupies residues 339–366; it reads GSILSILMGASAITGIMGTVAFTWLRRK. At 367-368 the chain is on the cytoplasmic side; the sequence is CG. The helical transmembrane segment at 369 to 391 threads the bilayer; it reads LVRTGLISGLAQLSCLILCVISV. Topologically, residues 392-453 are extracellular; it reads FMPGSPLDLS…ETSPESVPII (62 aa). Residue Asn434 is glycosylated (N-linked (GlcNAc...) asparagine). The chain crosses the membrane as a helical span at residues 454 to 483; that stretch reads SVSLLFAGVIAARIGLWSFDLTVTQLLQEN. Residues 484 to 488 are Cytoplasmic-facing; that stretch reads VIESE. A helical transmembrane segment spans residues 489–513; the sequence is RGIINGVQNSMNYLLDLLHFIMVIL. His507 contacts Fe cation. Over 514–516 the chain is Extracellular; sequence APN. The chain crosses the membrane as a helical span at residues 517-542; that stretch reads PEAFGLLVLISVSFVAMGHIMYFRFA. Residues 543–571 lie on the Cytoplasmic side of the membrane; that stretch reads QNTLGNKLFACGPDAKEVRKENQANTSVV.

It belongs to the ferroportin (FP) (TC 2.A.100) family. SLC40A subfamily. In terms of assembly, identified in a complex with STOM. Interacts with HAMP; affinity of the peptide hormone HAMP for SLC40A1 increases by 80-fold in the presence of iron and the interaction promotes SLC40A1 ubiquitination and degradation. Part of a complex composed of SLC40A1/ferroportin, TF/transferrin and HEPH/hephaestin that transfers iron from cells to transferrin. Post-translationally, polyubiquitinated by RNF217; leading to proteasomal degradation. Under conditions of high systemic iron levels, both the hormone peptide hepcidin/HAMP and holo(iron bound)-transferrin/TF induce the ubiquitination, internalization and proteasomal degradation of SLC40A1 to control iron release from cells. As to expression, detected in erythrocytes (at protein level). Expressed in placenta, intestine, muscle and spleen. Highly expressed in mature red blood.

Its subcellular location is the cell membrane. It localises to the basolateral cell membrane. It carries out the reaction Fe(2+)(in) = Fe(2+)(out). Functionally, transports Fe(2+) from the inside of a cell to the outside of the cell, playing a key role for maintaining systemic iron homeostasis. Transports iron from intestinal, splenic, hepatic cells, macrophages and erythrocytes into the blood to provide iron to other tissues. Controls therefore dietary iron uptake, iron recycling by macrophages and erythrocytes, and release of iron stores in hepatocytes. When iron is in excess in serum, circulating HAMP/hepcidin levels increase resulting in a degradation of SLC40A1, thus limiting the iron efflux to plasma. The protein is Ferroportin of Homo sapiens (Human).